Consider the following 234-residue polypeptide: Large ribosomal subunit protein uL1 (234 aa).

Belongs to the universal ribosomal protein uL1 family. As to quaternary structure, part of the 50S ribosomal subunit.

Functionally, binds directly to 23S rRNA. The L1 stalk is quite mobile in the ribosome, and is involved in E site tRNA release. In terms of biological role, protein L1 is also a translational repressor protein, it controls the translation of the L11 operon by binding to its mRNA. This chain is Large ribosomal subunit protein uL1, found in Serratia marcescens.